The sequence spans 452 residues: UPF0210 protein Csac_1314 (452 aa).

This sequence belongs to the UPF0210 family. In terms of assembly, homodimer.

The sequence is that of UPF0210 protein Csac_1314 from Caldicellulosiruptor saccharolyticus (strain ATCC 43494 / DSM 8903 / Tp8T 6331).